The sequence spans 437 residues: Eukaryotic peptide chain release factor subunit 1 (437 aa).

Q182 carries the post-translational modification N5-methylglutamine. K331 is covalently cross-linked (Glycyl lysine isopeptide (Lys-Gly) (interchain with G-Cter in ubiquitin)). S421 carries the phosphoserine modification.

This sequence belongs to the eukaryotic release factor 1 family. As to quaternary structure, component of the eRF1-eRF3-GTP ternary complex, composed of SUP45/eRF1, SUP35/eRF3 and GTP. Interacts with TPA1. In terms of processing, N5-methylated on Gln-182 by MTQ2.

It is found in the cytoplasm. In terms of biological role, component of the eRF1-eRF3-GTP ternary complex, a ternary complex that mediates translation termination in response to the termination codons. The eRF1-eRF3-GTP complex binds to a stop codon in the ribosomal A-site. SUP45/eRF1 is responsible for stop codon recognition and inducing hydrolysis of peptidyl-tRNA. Following GTP hydrolysis by SUP35/eRF3, SUP35/eRF3 dissociates, permitting SUP45/eRF1 to accommodate fully in the A-site and mediate hydrolysis of peptidyl-tRNA. This chain is Eukaryotic peptide chain release factor subunit 1 (SUP45), found in Saccharomyces cerevisiae (strain ATCC 204508 / S288c) (Baker's yeast).